The chain runs to 216 residues: Pyrrolidone-carboxylate peptidase (216 aa).

Active-site residues include E80, C143, and H168.

This sequence belongs to the peptidase C15 family. In terms of assembly, homotetramer.

It is found in the cytoplasm. The catalysed reaction is Release of an N-terminal pyroglutamyl group from a polypeptide, the second amino acid generally not being Pro.. Removes 5-oxoproline from various penultimate amino acid residues except L-proline. In Cupriavidus necator (strain ATCC 17699 / DSM 428 / KCTC 22496 / NCIMB 10442 / H16 / Stanier 337) (Ralstonia eutropha), this protein is Pyrrolidone-carboxylate peptidase.